Reading from the N-terminus, the 1117-residue chain is Endogenous retrovirus group K member 9 Pol protein (1117 aa).

Glycine 2 carries N-myristoyl glycine lipidation. The region spanning 58 to 195 (KDWKRIGKEL…AGQVPVTLQP (138 aa)) is the Reverse transcriptase domain. The interval 165–264 (GKGPELVGPS…APPSRQGSEL (100 aa)) is disordered. A compositionally biased stretch (pro residues) spans 232–247 (GMPPAPQGRAPYPQPP). 2 CCHC-type zinc fingers span residues 544 to 561 (GKCY…NCPV) and 580 to 597 (DLCP…QCRS). The tract at residues 598-629 (KFDKNGQPLSGNEQRGQPQAPQQTGAFPIQPF) is disordered. Residues 604–622 (QPLSGNEQRGQPQAPQQTG) show a composition bias toward polar residues. The region spanning 800–875 (FEGLVDTGAD…IPLNLWGRDL (76 aa)) is the Peptidase A2 domain. Aspartate 805 is a catalytic residue. A G-patch domain is found at 890–936 (YSPTSQKIMTKRGYIPGKGLGKNEDGIKIPFEAKINQKREGIGYPFL).

It belongs to the beta type-B retroviral polymerase family. HERV class-II K(HML-2) pol subfamily. In terms of processing, myristoylation is essential for retroviral assembly. Alteration of the glycine residue leads to a block in the budding of particles and an accumulation of Gag inside the cell. Post-translationally, specific enzymatic cleavages may yield mature proteins.

Its subcellular location is the cell membrane. It carries out the reaction Processing at the authentic HIV-1 PR recognition site and release of the mature p17 matrix and the p24 capsid protein, as a result of the cleavage of the -SQNY-|-PIVQ- cleavage site.. It catalyses the reaction DNA(n) + a 2'-deoxyribonucleoside 5'-triphosphate = DNA(n+1) + diphosphate. The catalysed reaction is Endonucleolytic cleavage to 5'-phosphomonoester.. In terms of biological role, the products of the Gag polyproteins of infectious retroviruses perform highly complex orchestrated tasks during the assembly, budding, maturation, and infection stages of the viral replication cycle. During viral assembly, the proteins form membrane associations and self-associations that ultimately result in budding of an immature virion from the infected cell. Gag precursors also function during viral assembly to selectively bind and package two plus strands of genomic RNA. Endogenous Gag proteins may have kept, lost or modified their original function during evolution. Functionally, early post-infection, the reverse transcriptase converts the viral RNA genome into double-stranded viral DNA. The RNase H domain of the reverse transcriptase performs two functions. It degrades the RNA template and specifically removes the RNA primer from the RNA/DNA hybrid. Following nuclear import, the integrase catalyzes the insertion of the linear, double-stranded viral DNA into the host cell chromosome. Endogenous Pol proteins may have kept, lost or modified their original function during evolution. The protein is Endogenous retrovirus group K member 9 Pol protein (ERVK-9) of Homo sapiens (Human).